Consider the following 230-residue polypeptide: Uracil-DNA glycosylase (230 aa).

The active-site Proton acceptor is the aspartate 70.

Belongs to the uracil-DNA glycosylase (UDG) superfamily. UNG family.

The protein localises to the cytoplasm. It carries out the reaction Hydrolyzes single-stranded DNA or mismatched double-stranded DNA and polynucleotides, releasing free uracil.. Its function is as follows. Excises uracil residues from the DNA which can arise as a result of misincorporation of dUMP residues by DNA polymerase or due to deamination of cytosine. The sequence is that of Uracil-DNA glycosylase from Pseudomonas putida (strain W619).